Here is a 253-residue protein sequence, read N- to C-terminus: Imidazole glycerol phosphate synthase subunit HisF (253 aa).

Catalysis depends on residues Asp-11 and Asp-130.

The protein belongs to the HisA/HisF family. Heterodimer of HisH and HisF.

It is found in the cytoplasm. The enzyme catalyses 5-[(5-phospho-1-deoxy-D-ribulos-1-ylimino)methylamino]-1-(5-phospho-beta-D-ribosyl)imidazole-4-carboxamide + L-glutamine = D-erythro-1-(imidazol-4-yl)glycerol 3-phosphate + 5-amino-1-(5-phospho-beta-D-ribosyl)imidazole-4-carboxamide + L-glutamate + H(+). It participates in amino-acid biosynthesis; L-histidine biosynthesis; L-histidine from 5-phospho-alpha-D-ribose 1-diphosphate: step 5/9. IGPS catalyzes the conversion of PRFAR and glutamine to IGP, AICAR and glutamate. The HisF subunit catalyzes the cyclization activity that produces IGP and AICAR from PRFAR using the ammonia provided by the HisH subunit. This chain is Imidazole glycerol phosphate synthase subunit HisF, found in Dehalococcoides mccartyi (strain ATCC BAA-2266 / KCTC 15142 / 195) (Dehalococcoides ethenogenes (strain 195)).